The primary structure comprises 208 residues: Ribosomal RNA large subunit methyltransferase E (208 aa).

The S-adenosyl-L-methionine site is built by glycine 62, tryptophan 64, aspartate 82, aspartate 98, and aspartate 123. The Proton acceptor role is filled by lysine 163.

This sequence belongs to the class I-like SAM-binding methyltransferase superfamily. RNA methyltransferase RlmE family.

The protein localises to the cytoplasm. The enzyme catalyses uridine(2552) in 23S rRNA + S-adenosyl-L-methionine = 2'-O-methyluridine(2552) in 23S rRNA + S-adenosyl-L-homocysteine + H(+). Functionally, specifically methylates the uridine in position 2552 of 23S rRNA at the 2'-O position of the ribose in the fully assembled 50S ribosomal subunit. This chain is Ribosomal RNA large subunit methyltransferase E, found in Edwardsiella ictaluri (strain 93-146).